The primary structure comprises 220 residues: Splicing factor U2AF 26 kDa subunit (220 aa).

At Ala2 the chain carries N-acetylalanine. The C3H1-type 1 zinc finger occupies 12 to 40 (EKDKVNCSFYFKIGVCRHGDRCSRLHNKP). The RRM domain maps to 65 to 147 (SHCHVSDVEV…QAVHGELSPV (83 aa)). The C3H1-type 2 zinc finger occupies 149-176 (DFRESCCRQYEMGECTRGGFCNFMHLRP). The segment at 185 to 220 (LYGRGPRRRSPPRFHTGHHPRERNHRCSPDHWHGRF) is disordered. Residues 189-208 (GPRRRSPPRFHTGHHPRERN) are compositionally biased toward basic residues. Residues 209-220 (HRCSPDHWHGRF) are compositionally biased toward basic and acidic residues.

Belongs to the splicing factor SR family. Interacts with GFI1, U2AF2 and C1QBP. As to expression, isoform 2 is widely expressed. Isoform 3 is highly expressed in heart, brain and lung, lower expressed in thymus and much lower expressed in peripheral blood leukocytes.

Its subcellular location is the nucleus. The protein localises to the nucleus speckle. The protein resides in the cytoplasm. RNA-binding protein that function as a pre-mRNA splicing factor. Plays a critical role in both constitutive and enhancer-dependent splicing by mediating protein-protein interactions and protein-RNA interactions required for accurate 3'-splice site selection. Acts by enhancing the binding of U2AF2 to weak pyrimidine tracts. Also participates in the regulation of alternative pre-mRNA splicing. Activates exon 5 skipping of PTPRC during T-cell activation; an event reversed by GFI1. Binds to RNA at the AG dinucleotide at the 3'-splice site. Shows a preference for AGC or AGA. This chain is Splicing factor U2AF 26 kDa subunit (U2AF1L4), found in Homo sapiens (Human).